Reading from the N-terminus, the 197-residue chain is Protein U63 (197 aa).

This sequence belongs to the herpesviridae UL92 family.

The chain is Protein U63 from Elephas maximus (Indian elephant).